Reading from the N-terminus, the 143-residue chain is Large ribosomal subunit protein uL11 (143 aa).

Belongs to the universal ribosomal protein uL11 family. In terms of assembly, part of the ribosomal stalk of the 50S ribosomal subunit. Interacts with L10 and the large rRNA to form the base of the stalk. L10 forms an elongated spine to which L12 dimers bind in a sequential fashion forming a multimeric L10(L12)X complex. One or more lysine residues are methylated.

Its function is as follows. Forms part of the ribosomal stalk which helps the ribosome interact with GTP-bound translation factors. This Phenylobacterium zucineum (strain HLK1) protein is Large ribosomal subunit protein uL11.